Consider the following 85-residue polypeptide: Small ribosomal subunit protein bS20 (85 aa).

The segment at 1–22 (MPQIKSAIKRVKTQNATNKRNA) is disordered. The segment covering 13 to 22 (TQNATNKRNA) has biased composition (polar residues).

This sequence belongs to the bacterial ribosomal protein bS20 family.

In terms of biological role, binds directly to 16S ribosomal RNA. This Lactobacillus acidophilus (strain ATCC 700396 / NCK56 / N2 / NCFM) protein is Small ribosomal subunit protein bS20.